A 354-amino-acid chain; its full sequence is UDP-2,3-diacetamido-2,3-dideoxy-D-glucuronate 2-epimerase (354 aa).

Belongs to the UDP-N-acetylglucosamine 2-epimerase family.

It catalyses the reaction UDP-2,3-diacetamido-2,3-dideoxy-alpha-D-glucuronate = UDP-2,3-diacetamido-2,3-dideoxy-alpha-D-mannuronate. The protein operates within bacterial outer membrane biogenesis; LPS O-antigen biosynthesis. Functionally, plays a role in the biosynthesis of B-band O antigen for serotype O5. Catalyzes the epimerization of UDP-2,3-diacetamido-2,3-dideoxy-alpha-D-glucuronic acid (UDP-alpha-D-GlcNAc3NAcA) to UDP-2,3-diacetamido-2,3-dideoxy-alpha-D-mannuronic acid (UDP-alpha-D-ManNAc3NAcA). Exhibits high specificity towards the substrate as UDP-alpha-D-GlcNAc, UDP-alpha-D-GlcNAcA (UDP-2-acetamido-2-deoxy-alpha-D-glucuronic acid) and UDP-alpha-D-GlcNAc3NAc (UDP-2,3-diacetamido-2,3-dideoxy-alpha-D-glucose) cannot act as substrates. This is UDP-2,3-diacetamido-2,3-dideoxy-D-glucuronate 2-epimerase from Pseudomonas aeruginosa (strain ATCC 15692 / DSM 22644 / CIP 104116 / JCM 14847 / LMG 12228 / 1C / PRS 101 / PAO1).